Consider the following 130-residue polypeptide: Small ribosomal subunit protein uS8 (130 aa).

The protein belongs to the universal ribosomal protein uS8 family. In terms of assembly, part of the 30S ribosomal subunit. Contacts proteins S5 and S12.

In terms of biological role, one of the primary rRNA binding proteins, it binds directly to 16S rRNA central domain where it helps coordinate assembly of the platform of the 30S subunit. This Aliivibrio fischeri (strain MJ11) (Vibrio fischeri) protein is Small ribosomal subunit protein uS8.